We begin with the raw amino-acid sequence, 152 residues long: Large ribosomal subunit protein bL9 (152 aa).

Belongs to the bacterial ribosomal protein bL9 family.

In terms of biological role, binds to the 23S rRNA. The sequence is that of Large ribosomal subunit protein bL9 from Nostoc punctiforme (strain ATCC 29133 / PCC 73102).